The sequence spans 463 residues: Cysteine--tRNA ligase (463 aa).

Cysteine 29 contributes to the Zn(2+) binding site. Residues 31–41 carry the 'HIGH' region motif; sequence PTVYNYAHIGN. Residues cysteine 211, histidine 236, and glutamate 240 each contribute to the Zn(2+) site. The short motif at 269 to 273 is the 'KMSKS' region element; the sequence is KMSKS. Lysine 272 serves as a coordination point for ATP.

Belongs to the class-I aminoacyl-tRNA synthetase family. In terms of assembly, monomer. Requires Zn(2+) as cofactor.

It localises to the cytoplasm. It catalyses the reaction tRNA(Cys) + L-cysteine + ATP = L-cysteinyl-tRNA(Cys) + AMP + diphosphate. This chain is Cysteine--tRNA ligase, found in Caulobacter vibrioides (strain ATCC 19089 / CIP 103742 / CB 15) (Caulobacter crescentus).